The following is a 704-amino-acid chain: Polyribonucleotide nucleotidyltransferase (704 aa).

Positions 490 and 496 each coordinate Mg(2+). Positions 557–616 (PKIEMIQIKPAKIKDVIGKGGETINSIIDETGVKIDIDQDGNVSIASSDAEMIKKAIKII) constitute a KH domain. Positions 626 to 694 (GQVYLAKVVR…KQGRVNVSRK (69 aa)) constitute an S1 motif domain.

It belongs to the polyribonucleotide nucleotidyltransferase family. Requires Mg(2+) as cofactor.

Its subcellular location is the cytoplasm. The enzyme catalyses RNA(n+1) + phosphate = RNA(n) + a ribonucleoside 5'-diphosphate. In terms of biological role, involved in mRNA degradation. Catalyzes the phosphorolysis of single-stranded polyribonucleotides processively in the 3'- to 5'-direction. The polypeptide is Polyribonucleotide nucleotidyltransferase (Enterococcus faecalis (strain ATCC 700802 / V583)).